We begin with the raw amino-acid sequence, 227 residues long: uncharacterized protein (227 aa).

A coiled-coil region spans residues 52–100; it reads NKRAKLYRERNKAKLKEKQHKWYHKGGGKEHKKLYDKINLEKSNMRDKN.

It belongs to the mimivirus L246/L426 family.

This is an uncharacterized protein from Acanthamoeba polyphaga mimivirus (APMV).